Reading from the N-terminus, the 241-residue chain is Small ribosomal subunit protein uS2 (241 aa).

This sequence belongs to the universal ribosomal protein uS2 family.

This is Small ribosomal subunit protein uS2 from Glaesserella parasuis serovar 5 (strain SH0165) (Haemophilus parasuis).